We begin with the raw amino-acid sequence, 419 residues long: ATP-dependent RNA helicase RhlB (419 aa).

The Q motif motif lies at 9–37; sequence QRFSDLALHRIVQQAIKEKGFEFCTPIQA. The Helicase ATP-binding domain maps to 40-217; that stretch reads LPITLKGQDI…FEHMNDPQYV (178 aa). 53–60 serves as a coordination point for ATP; sequence AQTGTGKT. A DEAD box motif is present at residues 163-166; the sequence is DEAD. The region spanning 241-388 is the Helicase C-terminal domain; it reads KMALLMTLLE…VSQYDAKALI (148 aa).

Belongs to the DEAD box helicase family. RhlB subfamily. Component of the RNA degradosome, which is a multiprotein complex involved in RNA processing and mRNA degradation.

It localises to the cytoplasm. It catalyses the reaction ATP + H2O = ADP + phosphate + H(+). Its function is as follows. DEAD-box RNA helicase involved in RNA degradation. Has RNA-dependent ATPase activity and unwinds double-stranded RNA. This chain is ATP-dependent RNA helicase RhlB, found in Histophilus somni (strain 2336) (Haemophilus somnus).